The chain runs to 2121 residues: MVNIYIFGDQTVRVDDAVHKLLHVKNNPILKSFLDGSFAAIRKQIFLLPANERTSLPDAHTLPLLLEAVRRGRRHVALESALVCLCEIGQYIALLQTTDLCHPPTGSILVGFCTGSLAAAAVSCVRTSIDLLTLGIEAVVVAFRVGMHVARRANALGGDGGSQWKPWSLAVTDGSESETEKILEEFTRDEVSGVHVANRHDAYILAKGLPAIMKPYVSAAGSNTLTISGTPRVLEALKASPHLRGTKSLPVSIYAPYHAAHLYNEADVESIFACKPVESALFHRELRTPLISCATGTVLKEKTFGDLLRALVMEILTCQIRFDKVEESIVQHTPGATAQLIPIHTNIAPRMKTSLTQVGLQVECFKAIANQEPAAEALSESPSNDSSKIAIIGFSGRFPEADGLNEFWELLQQGLDVHKPIPADRFDLEAHYDATLREKNTSRIKHGCWIRSPGSFDARFFQMSPREACQTDPAQRLALLTAYEAMEMAGFVPDRTPSSQRDRVGVYYGMTSDDWREVNSSQDIDTYFIPGGIRAFVPGRINYFFKFSGPSITVDTACSSSLAAIHTACNALLNSDCDTALAGGTNILTNPDNFAGLDRGHFLSSTGNCKTFDDDADGYCRADGVGTVILKRLQDAIADNDPIFGVIVGARTSHSAEAVSITRPLADAQAHLFRKLLAESGIHPHEISYIEMHGTGTQAGDAVEMKSVLDSFARDDSRAPDRPLHLGSVKANVGHGESASGVTALIKVLLMMQKNRIPPHCGIKGRINRHFPTDMEYRNVHIPFMETDWTRPQEGKRRSFINNFSAAGGNTAVLVEDAPLLEQSRAISSPDPQRYHVITLSARSVRSLSKNMRALGEFIGSETSPGLLARIAYTTTARRMHHSYRVAFVGNDLQEVKRRFLDTDVTEAIKPCPTKSPGVGFLFTGQGAQQTAMARELYDRFTSFRADILEFEAVGRGHGFPSILPLITGAVDVEELSPMIVQLGTVVIQIAMARLWQTWGLTPEYALGHSLGEYAALQIAGVLSISDTIYLAGSRAALLEKRCTAGSHGMLAVKASVAHLEEALKGMQVEVSCINGFDDTVLSGTNDEIDRASKELSELKVTFKRLILPFAFHSSQVDPILEELEHIASQLSFQPPRIPIVSPTVGHIITDEGTIGAQYIRRHCREPVNFLGAIQAAQGSGICNSGALAVEIGAHPILTRMMKAAVGSSVTVCSTLSHREDMFKTLTESLSVLHLAGVRLNWDEYHRDFNNQVVMLPAYSWDYQDYWIQYQNNFCLTKGSPERSESVDAIQPMSTRLSPSVQKILEEEMTAAQASIIIESDITDPELLPVALDHKVNGVTLCPSSLYADIGHTLGTYLLGKKEDVTDYKIDVSNMAVEKALVVKGTGPQLFRASLDMDWNMLRGMMKVYSVNNMGTLTTHHAQCTIELQRPHQWQEGWNRQLYLIQRSIEQLKKGVEEGWTHKMRRGVAYRLFSSMMQYGPSYQAMEEVIFDSSGLEATAQVRLQSTTGRYSFNPVWSDSLGHITGFVTNCNDSIDLTENLFVNHGWGFMRCVEPFSPDTVYQTHVKMQPVDGNNGFYVGDVYVLNDHRIIAQYGAVTFQKVARRVLEMLLPATTSKGRSSNIRPRNVGTAQSAKIVQSKRRTQTPHVEDAWQQVLEMIARELGVDPGQLTEDVNFTDMGVDSLMSLTIIGNFREFLSLDVPWSLFEDCPSVQSLRIYLNMSSLSESDSIETSSYPTPDESTTTTITSPSGSDRNVGRNSGIDGVGTTVGLVLSILAEEIGVNVRDLSNADGLSELGLDSLLSITALGRVRDETDLDLPSDFFLEHSSVAAITAALHAIFGSTEQGPEQSLITSHPPAMSINLQGDEGCPQTLFLFPDGSGSSTSYSALPTISKDVRVYAMDCPYLKRPNELAKCQLQDLTPVYVAEIRRRQLRGPYSLGGWSAGGIAAYEAAQYLVDQGERVERLILIDSPNPMGLGKCPPHFYRFLEEAGVFGVHGGRKPPAWLLQHFQAFNDVLSQYTLEPFRPADATPNTTLIYAQDGVCKSPRDPRPERHPGDPEVFSWLLENRVDMSCNGWDQLLGEDNIHLGTVFDANHFTIVRTPAVVRLSEIVRMAMSRKFQ.

A Starter acyltransferase (SAT) domain is found at Y5–H258. In terms of domain architecture, Ketosynthase family 3 (KS3) spans S386 to D817. Residues C558, H693, and H735 each act as for beta-ketoacyl synthase activity in the active site. Positions F921–R1239 constitute a Malonyl-CoA:ACP transacylase (MAT) domain. The interval Q1302–Q1433 is N-terminal hotdog fold. In terms of domain architecture, PKS/mFAS DH spans Q1302–E1608. H1334 serves as the catalytic Proton acceptor; for dehydratase activity. The C-terminal hotdog fold stretch occupies residues T1461–E1608. D1519 acts as the Proton donor; for dehydratase activity in catalysis. The Carrier 1 domain occupies P1646–S1723. S1683 carries the post-translational modification O-(pantetheine 4'-phosphoryl)serine. Over residues D1728–S1752 the composition is skewed to low complexity. A disordered region spans residues D1728–S1760. In terms of domain architecture, Carrier 2 spans D1763–F1840. The residue at position 1800 (S1800) is an O-(pantetheine 4'-phosphoryl)serine. The interval T1872–G1976 is TE/CLC (thioesterase/Claisen cyclase) domain.

The cofactor is pantetheine 4'-phosphate.

Non-reducing polyketide synthase; part of the gene cluster that mediates the biosynthesis of a methylated derivative of known natural products orthosporin and diaporthin. AoiG catalyzes the biosynthesis of the hexaketide isocoumarin scaffold, via condensation of one acetyl-CoA starter unit with 6 malonyl-CoA units. An oxidoreductase that has still to be identified catalyzes the stereospecific reduction of the carbonyl moiety of the hexaketide isocoumarin scaffold to generate the S-configured secondary alcohol at C-11 of orthosporin. The methyltrasferase aoiF then catalyzes the biotransformation of not only orthosporin to diaporthin but also diaporthin to the final product, by performing a tandem methylation of the polyketide core. This chain is Non-reducing polyketide synthase aoiG, found in Aspergillus oryzae (strain ATCC 42149 / RIB 40) (Yellow koji mold).